The primary structure comprises 482 residues: UDP-N-acetylmuramoyl-L-alanyl-D-glutamate--2,6-diaminopimelate ligase 1 (482 aa).

Position 30 (Ser-30) interacts with UDP-N-acetyl-alpha-D-muramoyl-L-alanyl-D-glutamate. 110–116 is a binding site for ATP; it reads GTNGKTT. UDP-N-acetyl-alpha-D-muramoyl-L-alanyl-D-glutamate-binding positions include 152–153, Ser-179, and Arg-187; that span reads TT. Residue Lys-219 is modified to N6-carboxylysine. Residues Arg-378, 402–405, Gly-452, and Glu-456 each bind meso-2,6-diaminopimelate; that span reads DNPR. The Meso-diaminopimelate recognition motif motif lies at 402–405; it reads DNPR.

The protein belongs to the MurCDEF family. MurE subfamily. It depends on Mg(2+) as a cofactor. Post-translationally, carboxylation is probably crucial for Mg(2+) binding and, consequently, for the gamma-phosphate positioning of ATP.

It localises to the cytoplasm. The enzyme catalyses UDP-N-acetyl-alpha-D-muramoyl-L-alanyl-D-glutamate + meso-2,6-diaminopimelate + ATP = UDP-N-acetyl-alpha-D-muramoyl-L-alanyl-gamma-D-glutamyl-meso-2,6-diaminopimelate + ADP + phosphate + H(+). The protein operates within cell wall biogenesis; peptidoglycan biosynthesis. In terms of biological role, catalyzes the addition of meso-diaminopimelic acid to the nucleotide precursor UDP-N-acetylmuramoyl-L-alanyl-D-glutamate (UMAG) in the biosynthesis of bacterial cell-wall peptidoglycan. This chain is UDP-N-acetylmuramoyl-L-alanyl-D-glutamate--2,6-diaminopimelate ligase 1, found in Clostridium acetobutylicum (strain ATCC 824 / DSM 792 / JCM 1419 / IAM 19013 / LMG 5710 / NBRC 13948 / NRRL B-527 / VKM B-1787 / 2291 / W).